Reading from the N-terminus, the 80-residue chain is Three-finger toxin MALT0059C (80 aa).

Residues 1–21 (MRTLLLTLVVVTIVCLDLGNS) form the signal peptide. Intrachain disulfides connect Cys-24–Cys-41, Cys-35–Cys-60, Cys-64–Cys-72, and Cys-73–Cys-78.

This sequence belongs to the three-finger toxin family. Short-chain subfamily. Expressed by the venom gland.

The protein localises to the secreted. Its function is as follows. Neurotoxin. Blocks muscular nicotinic acetylcholine receptors (nAChR). In Micrurus altirostris (Uruguayan coral snake), this protein is Three-finger toxin MALT0059C.